The chain runs to 72 residues: uncharacterized protein (72 aa).

The protein localises to the plastid. It localises to the chloroplast. This is an uncharacterized protein from Oenothera berteroana (Bertero's evening primrose).